Reading from the N-terminus, the 227-residue chain is Monoamine regulon transcriptional regulator (227 aa).

Residues 155-220 (EDDLPAILTA…ELVSRTWMPA (66 aa)) enclose the HTH luxR-type domain. Positions 179–198 (NKLIARQLDISLSTVKTHLR) form a DNA-binding region, H-T-H motif.

In terms of biological role, positive regulatory protein for the induction of arylsulfatase synthesis (maoA), tyramine oxidase (tynA), maoC, maoE/F operon, and atsB/A operon which are all regulated by monoamines, and included under the common term of monoamine regulon. This Klebsiella aerogenes (Enterobacter aerogenes) protein is Monoamine regulon transcriptional regulator (moaR).